The following is a 267-amino-acid chain: uncharacterized protein (267 aa).

Positions 58 to 90 (RHTDDKQEKNQNEGEDNQKGENKTTDQQDGPKK) are disordered. The next 2 membrane-spanning stretches (helical) occupy residues 101 to 121 (IYVL…LSQM) and 226 to 246 (GMTT…AWLG).

The protein resides in the membrane. This is an uncharacterized protein from Caenorhabditis elegans.